The sequence spans 777 residues: Rho guanine nucleotide exchange factor 38 (777 aa).

Residue threonine 34 is modified to Phosphothreonine. Residues 35-72 (DTVVESSVSGDHSGTLRRSQSDRTEYNQKLQEKMTPQG) are disordered. Over residues 37–52 (VVESSVSGDHSGTLRR) the composition is skewed to polar residues. Residues 53-66 (SQSDRTEYNQKLQE) show a composition bias toward basic and acidic residues. Residues 94-285 (KREKIIKELI…KDINVNINEL (192 aa)) form the DH domain. The region spanning 327–536 (LKILTRGESQ…QNQVLEEIQN (210 aa)) is the BAR domain. The region spanning 582-645 (SAEELYQAKR…YSSFLKPYNP (64 aa)) is the SH3 1 domain. Positions 673–694 (PASDSVTGTSESSIGDSSSSLS) are disordered. Residues 679-694 (TGTSESSIGDSSSSLS) show a composition bias toward low complexity. One can recognise an SH3 2 domain in the interval 713-776 (VDEQIFYAVH…PANYLGKMTY (64 aa)).

May act as a guanine-nucleotide releasing factor. This chain is Rho guanine nucleotide exchange factor 38 (ARHGEF38), found in Homo sapiens (Human).